A 218-amino-acid chain; its full sequence is N-(5'-phosphoribosyl)anthranilate isomerase (218 aa).

Belongs to the TrpF family.

The enzyme catalyses N-(5-phospho-beta-D-ribosyl)anthranilate = 1-(2-carboxyphenylamino)-1-deoxy-D-ribulose 5-phosphate. It participates in amino-acid biosynthesis; L-tryptophan biosynthesis; L-tryptophan from chorismate: step 3/5. In Bordetella bronchiseptica (strain ATCC BAA-588 / NCTC 13252 / RB50) (Alcaligenes bronchisepticus), this protein is N-(5'-phosphoribosyl)anthranilate isomerase.